The chain runs to 919 residues: 2-oxoadipate dehydrogenase complex component E1 (919 aa).

N6-succinyllysine is present on residues lysine 183 and lysine 188. The disordered stretch occupies residues glycine 299 to glutamine 320. An N6-succinyllysine mark is found at lysine 800 and lysine 818.

The protein belongs to the alpha-ketoglutarate dehydrogenase family. The 2-oxoadipate dehydrogenase complex is composed of OADH (2-oxoadipate dehydrogenase; E1a), DLST (dihydrolipoamide succinyltransferase; E2) and DLD (dihydrolipoamide dehydrogenase; E3). E1a functional unit is a dimer. Interacts with DLST. Thiamine diphosphate serves as cofactor.

The protein resides in the mitochondrion. It catalyses the reaction N(6)-[(R)-lipoyl]-L-lysyl-[protein] + 2-oxoadipate + H(+) = N(6)-[(R)-S(8)-glutaryldihydrolipoyl]-L-lysyl-[protein] + CO2. The protein operates within amino-acid degradation. Its function is as follows. 2-oxoadipate dehydrogenase (E1a) component of the 2-oxoadipate dehydrogenase complex (OADHC). Participates in the first step, rate limiting for the overall conversion of 2-oxoadipate (alpha-ketoadipate) to glutaryl-CoA and CO(2) catalyzed by the whole OADHC. Catalyzes the irreversible decarboxylation of 2-oxoadipate via the thiamine diphosphate (ThDP) cofactor and subsequent transfer of the decarboxylated acyl intermediate on an oxidized dihydrolipoyl group that is covalently amidated to the E2 enzyme (dihydrolipoyllysine-residue succinyltransferase or DLST). Can catalyze the decarboxylation of 2-oxoglutarate in vitro, but at a much lower rate than 2-oxoadipate. Responsible for the last step of L-lysine, L-hydroxylysine and L-tryptophan catabolism with the common product being 2-oxoadipate. This is 2-oxoadipate dehydrogenase complex component E1 (DHTKD1) from Homo sapiens (Human).